The primary structure comprises 440 residues: Na(+)/H(+) antiporter NhaA (440 aa).

11 consecutive transmembrane segments (helical) span residues 25–45 (FLHIEATSGLVLILCTVVALV), 76–96 (LHHVINDGLMAVFFFVIGLEV), 112–132 (TLPIAAAIGGMIVPATLYLSM), 141–161 (GWGIPMATDIAFVVGCLAILG), 170–190 (VLLLSLAIVDDIGAILVIAIG), 194–214 (SLDGRYLFLAAVAVGAVHFLS), 225–245 (VIVGVLAWIALHESGIHATLI), 312–332 (HPWTAYVIMPVFALANAGVLI), 345–365 (VVIGLVVGKPLGIALFSWLVI), 378–398 (WPILMSGSFLAGIGFTMALFI), and 414–434 (GVLVGSAISAIAGMGLLLWTL).

This sequence belongs to the NhaA Na(+)/H(+) (TC 2.A.33) antiporter family.

Its subcellular location is the cell inner membrane. The enzyme catalyses Na(+)(in) + 2 H(+)(out) = Na(+)(out) + 2 H(+)(in). Na(+)/H(+) antiporter that extrudes sodium in exchange for external protons. The sequence is that of Na(+)/H(+) antiporter NhaA from Rhodopirellula baltica (strain DSM 10527 / NCIMB 13988 / SH1).